The following is a 284-amino-acid chain: Protoheme IX farnesyltransferase (284 aa).

Transmembrane regions (helical) follow at residues 13–33 (VTVLVLATVLPGMYLGTTGYP), 35–55 (LTVISITLFGTYLMSSASFIL), 84–104 (FALLLGIVVAIVSFGILTYFI), 106–126 (LLTAVCALAALLLYVFLYTIW), 134–154 (NIVIGGISGCIGPLIGYAAMA), 163–183 (VMFLMIFLWTPAHFWALAIFL), 205–225 (VNQIFLYAIAYSLSVIGFYFV), 229–249 (MGYLFLLSAIVLTVLILGFAY), and 264–284 (FFFSILHLFLVSIAIVIDSKI).

Belongs to the UbiA prenyltransferase family. Protoheme IX farnesyltransferase subfamily.

Its subcellular location is the cell inner membrane. It carries out the reaction heme b + (2E,6E)-farnesyl diphosphate + H2O = Fe(II)-heme o + diphosphate. It functions in the pathway porphyrin-containing compound metabolism; heme O biosynthesis; heme O from protoheme: step 1/1. Converts heme B (protoheme IX) to heme O by substitution of the vinyl group on carbon 2 of heme B porphyrin ring with a hydroxyethyl farnesyl side group. The chain is Protoheme IX farnesyltransferase from Leptospira biflexa serovar Patoc (strain Patoc 1 / Ames).